Consider the following 494-residue polypeptide: BUB3-interacting and GLEBS motif-containing protein ZNF207 (494 aa).

A microtubule-binding region region spans residues 1–92; it reads MGRKKKKQLK…EGIPEKDMDE (92 aa). 2 C2H2-type zinc fingers span residues 11–34 and 35–58; these read PWCWYCNRDFDDEKILTQHQKAKH and FKCHICHKKLYTGPGLAIHCMQVH. The span at 100 to 111 shows a compositional bias: basic and acidic residues; it reads KTQESQKKKQQD. 3 disordered regions span residues 100–161, 250–377, and 455–494; these read KTQE…PGIP, NRPP…SATS, and LPGAMPPYGQGPPMVPPYQGGPPRPPMGMRPPVMSQGGRY. The segment covering 112–121 has biased composition (acidic residues); it reads DSDEYDDDDS. The segment covering 127–136 has biased composition (polar residues); that stretch reads FQPQPVQPQQ. Residues 142–161 show a composition bias toward pro residues; sequence MAQPGLPPVPGAPGMPPGIP. The segment covering 283 to 300 has biased composition (low complexity); the sequence is SSSTASSNSESLSASSKA. A compositionally biased stretch (polar residues) spans 323–332; it reads LNSTPATSTE. Low complexity predominate over residues 342 to 377; that stretch reads TQSTASTTSTTNSTAAKPAASITSKPATLTTTSATS. Residues 375–407 form a GLEBS region; the sequence is ATSKLIHPDEDISLEERRAQLPKYQRNLPRPGQ. The segment covering 463–483 has biased composition (pro residues); it reads GQGPPMVPPYQGGPPRPPMGM.

In terms of assembly, interacts (via GLEBS region) with BUB3.

The protein resides in the nucleus. Its subcellular location is the chromosome. The protein localises to the centromere. It is found in the kinetochore. It localises to the cytoplasm. The protein resides in the cytoskeleton. Its subcellular location is the spindle. Kinetochore- and microtubule-binding protein that plays a key role in spindle assembly. ZNF207/BuGZ is mainly composed of disordered low-complexity regions and undergoes phase transition or coacervation to form temperature-dependent liquid droplets. Coacervation promotes microtubule bundling and concentrates tubulin, promoting microtubule polymerization and assembly of spindle and spindle matrix by concentrating its building blocks. Also acts as a regulator of mitotic chromosome alignment by mediating the stability and kinetochore loading of BUB3. Mechanisms by which BUB3 is protected are unclear: according to a first report, ZNF207/BuGZ may act by blocking ubiquitination and proteasomal degradation of BUB3. According to another report, the stabilization is independent of the proteasome. This is BUB3-interacting and GLEBS motif-containing protein ZNF207 from Pongo abelii (Sumatran orangutan).